A 328-amino-acid chain; its full sequence is Malate dehydrogenase (328 aa).

12-18 (GAAGQIG) provides a ligand contact to NAD(+). 2 residues coordinate substrate: R95 and R101. NAD(+)-binding positions include N108, Q115, and 132 to 134 (VGN). N134 and R165 together coordinate substrate. H190 functions as the Proton acceptor in the catalytic mechanism.

Belongs to the LDH/MDH superfamily. MDH type 2 family.

The catalysed reaction is (S)-malate + NAD(+) = oxaloacetate + NADH + H(+). Its function is as follows. Catalyzes the reversible oxidation of malate to oxaloacetate. The protein is Malate dehydrogenase of Polaromonas sp. (strain JS666 / ATCC BAA-500).